The chain runs to 910 residues: DNA repair and recombination protein RAD54B (910 aa).

Residues 1–14 show a composition bias toward polar residues; it reads MRRSAAPSQLQGNS. The interval 1–33 is disordered; that stretch reads MRRSAAPSQLQGNSFKKPKFIPPGRSNPGLNEE. S14 bears the Phosphoserine mark. In terms of domain architecture, Helicase ATP-binding spans 313–480; sequence GMRMNGRCGA…FALIDFVNPG (168 aa). An ATP-binding site is contributed by 326–333; the sequence is DEMGLGKT. Residues 431–434 carry the DEGH box motif; that stretch reads DEGH. One can recognise a Helicase C-terminal domain in the interval 649 to 810; that stretch reads KLLAVIHELR…HIQFSVEELK (162 aa).

It belongs to the SNF2/RAD54 helicase family. As to quaternary structure, interacts with RAD51 through the NH2-terminal domain. Immunoprecipitation experiments show that the interaction is constitutive and not induced by ionizing radiation. The interaction may be indirect. In terms of tissue distribution, abundantly expressed in testis and spleen. Relatively low levels observed in thymus, prostate, ovary and colon.

Its subcellular location is the nucleus. In terms of biological role, involved in DNA repair and mitotic recombination. May play an active role in recombination processes in concert with other members of the RAD52 epistasis group. This is DNA repair and recombination protein RAD54B (RAD54B) from Homo sapiens (Human).